The primary structure comprises 250 residues: DNA repair protein RecO (250 aa).

Belongs to the RecO family.

Its function is as follows. Involved in DNA repair and RecF pathway recombination. This chain is DNA repair protein RecO, found in Syntrophomonas wolfei subsp. wolfei (strain DSM 2245B / Goettingen).